We begin with the raw amino-acid sequence, 123 residues long: Alpha-lactalbumin B/C (123 aa).

Positions 1 to 123 constitute a C-type lysozyme domain; sequence KQFTKCQLSQ…KLEQWLCEEL (123 aa). Cystine bridges form between C6-C120, C28-C111, C61-C77, and C73-C91. K79, D82, D84, D87, and D88 together coordinate Ca(2+).

Belongs to the glycosyl hydrolase 22 family. In terms of assembly, lactose synthase (LS) is a heterodimer of a catalytic component, beta1,4-galactosyltransferase (beta4Gal-T1) and a regulatory component, alpha-lactalbumin (LA). As to expression, mammary gland specific. Secreted in milk.

The protein resides in the secreted. Regulatory subunit of lactose synthase, changes the substrate specificity of galactosyltransferase in the mammary gland making glucose a good acceptor substrate for this enzyme. This enables LS to synthesize lactose, the major carbohydrate component of milk. In other tissues, galactosyltransferase transfers galactose onto the N-acetylglucosamine of the oligosaccharide chains in glycoproteins. The sequence is that of Alpha-lactalbumin B/C from Equus caballus (Horse).